A 611-amino-acid chain; its full sequence is Sodium-coupled monocarboxylate transporter 1 (611 aa).

Over 1–9 (MDASRDIGS) the chain is Extracellular. Residues 10 to 30 (FVVWDYVVFAGMLLISAAIGI) form a helical membrane-spanning segment. The Cytoplasmic segment spans residues 31–51 (YYAFAGGGQQTSKDFLMGGRS). The chain crosses the membrane as a helical span at residues 52–72 (MSAVPVALSLTASFMSAVTVL). The Extracellular portion of the chain corresponds to 73 to 86 (GTPAEVYRFGAIFS). The helical transmembrane segment at 87-107 (IFVITYFFVVVISAEVFLPVF) threads the bilayer. Over 108–132 (YRLGITSTYEYLELRFNRCIRLCGT) the chain is Cytoplasmic. A helical transmembrane segment spans residues 133–153 (ILFIVQTILYTGIVIYAPALA). The Extracellular segment spans residues 154–161 (LNQVTGFD). The chain crosses the membrane as a helical span at residues 162–182 (LWGAVVATGVVCTFYCTLGGL). The Cytoplasmic segment spans residues 183 to 184 (KA). Residues 185–205 (VVWTDVFQVGIMVAGFASVII) traverse the membrane as a helical segment. At 206–239 (QASITQHGINKILSDAFNGGRLNFWNFDPNPLQR) the chain is on the extracellular side. Residues 240-260 (HTFWTIVIGGTFTWTTIYGVN) traverse the membrane as a helical segment. Residues 261–279 (QSQVQRYISCKSRLHAKLS) are Cytoplasmic-facing. Residues 280-300 (LYVNLVGLWVILTCSIFCGLA) traverse the membrane as a helical segment. At 301–336 (LYSRYRECDPWTSKKVSAIDQLMPYLVLDILKNYPG) the chain is on the extracellular side. The helical transmembrane segment at 337 to 359 (VPGLFVACAYSGTLSTVSSSINA) threads the bilayer. Residues 360-389 (LAAVTVEDLIKPRFKSLSEKSLSWISQGMS) lie on the Cytoplasmic side of the membrane. A helical transmembrane segment spans residues 390 to 410 (VLYGALCIGMAALASLMGALL). Over 411-415 (QAALS) the chain is Extracellular. The helical transmembrane segment at 416–436 (IFGMVGGPLLGLFSLGILVPF) threads the bilayer. Topologically, residues 437–439 (ANS) are cytoplasmic. A helical transmembrane segment spans residues 440-460 (IGALTGLLAGFAISLWVGIGA). At 461 to 518 (QLYPPLPERTLPLPLETYGCNITHNGSDWMSTTEMPFSTSAFQIHNAERTPLMDNWYS) the chain is on the extracellular side. N-linked (GlcNAc...) asparagine glycosylation occurs at N485. Residues 519–539 (LSYLYFSTIGTLTTLFVGILI) traverse the membrane as a helical segment. At 540–611 (SLSTGGRKQN…HSGKINGTRL (72 aa)) the chain is on the cytoplasmic side. A PDZ-binding motif is present at residues 609–611 (TRL).

It belongs to the sodium:solute symporter (SSF) (TC 2.A.21) family. Interacts (via PDZ-binding motif) with PDZK1 (via PDZ domains 1 and 3); interaction increases nicotinate transport activity of SLC5A8. In terms of tissue distribution, expressed in brain, colon, kidney and in the ileum and jejunum of small intestine. In the kidney, expression occurred in the proximal tubule and the loop of Henle, being restricted to tubular epithelial cells in both the cortex and the medulla. In the colon, predominantly expressed in the distal half of the large bowel and in the most terminal ileum. Localized selectively in the luminal surface of crypts in the large intestine and to the brush border in the middle parts of crypts in the cecum. In the brain, expression was seen throughout, exclusively in neurons, including the cortex, hippocampus, cerebellum and pituitary gland (at protein level). Expression is reduced in oligodendrogliomas.

The protein resides in the apical cell membrane. The catalysed reaction is (S)-lactate(out) + 2 Na(+)(out) = (S)-lactate(in) + 2 Na(+)(in). The enzyme catalyses propanoate(out) + 2 Na(+)(out) = propanoate(in) + 2 Na(+)(in). It carries out the reaction pyruvate(out) + 2 Na(+)(out) = pyruvate(in) + 2 Na(+)(in). It catalyses the reaction acetate(out) + 2 Na(+)(out) = acetate(in) + 2 Na(+)(in). The catalysed reaction is butanoate(out) + 2 Na(+)(out) = butanoate(in) + 2 Na(+)(in). The enzyme catalyses nicotinate(out) + 2 Na(+)(out) = nicotinate(in) + 2 Na(+)(in). It carries out the reaction (R)-3-hydroxybutanoate(out) + 2 Na(+)(out) = (R)-3-hydroxybutanoate(in) + 2 Na(+)(in). It catalyses the reaction acetoacetate(out) + 2 Na(+)(out) = acetoacetate(in) + 2 Na(+)(in). The catalysed reaction is 4-methyl-2-oxopentanoate(out) + 2 Na(+)(out) = 4-methyl-2-oxopentanoate(in) + 2 Na(+)(in). The enzyme catalyses 5-oxo-L-proline(out) + 2 Na(+)(out) = 5-oxo-L-proline(in) + 2 Na(+)(in). It carries out the reaction iodide(out) = iodide(in). It catalyses the reaction chloride(in) = chloride(out). The catalysed reaction is nitrate(in) = nitrate(out). The enzyme catalyses bromide(in) = bromide(out). Its activity is regulated as follows. Transport of D-lactate and pyruvate stimulated by alpha-cyano-4-hydroxycinnamic acid, but inhibited by the short-chain fatty acids acetate, propionate and butyrate. Acts as an electrogenic sodium (Na(+)) and chloride (Cl-)-dependent sodium-coupled solute transporter, including transport of monocarboxylates (short-chain fatty acids including L-lactate, D-lactate, pyruvate, acetate, propionate, valerate and butyrate), mocarboxylate drugs (nicotinate, benzoate, salicylate and 5-aminosalicylate) and ketone bodies (beta-D-hydroxybutyrate, acetoacetate and alpha-ketoisocaproate), with a Na(+):substrate stoichiometry of between 4:1 and 2:1. Catalyzes passive carrier mediated diffusion of iodide. Mediates iodide transport from the thyrocyte into the colloid lumen through the apical membrane. May be responsible for the absorption of D-lactate and monocarboxylate drugs from the intestinal tract. May play a critical role in the entry of L-lactate and ketone bodies into neurons by a process driven by an electrochemical Na(+) gradient and hence contribute to the maintenance of the energy status and function of neurons. Mediates sodium-coupled electrogenic transport of pyroglutamate (5-oxo-L-proline). Can mediate the transport of chloride, bromide, iodide and nitrate ions when external concentration of sodium ions is reduced. This Mus musculus (Mouse) protein is Sodium-coupled monocarboxylate transporter 1.